A 1038-amino-acid chain; its full sequence is P3N-PIPO polyprotein (1038 aa).

Residues 170–313 (LVAKSDFDDL…AGDVGRTMHY (144 aa)) enclose the Peptidase S30 domain. Active-site for P1 proteinase activity residues include histidine 224, glutamate 233, and serine 266. Residues 365–368 (KMAC) carry the Involved in interaction with stylet and aphid transmission motif. The Involved in virions binding and aphid transmission motif lies at 622-624 (PTK). Positions 648 to 770 (MYIAKEGYCY…EGEMKWYRVG (123 aa)) constitute a Peptidase C6 domain. Catalysis depends on for helper component proteinase activity residues cysteine 656 and histidine 729.

It belongs to the potyviridae P3N-PIPO polyprotein family. Interacts (via PIPO domain) with host PCaP1 protein; this interaction may help to anchor the movement complex to the plasma membrane from which the complex could move to the plasmodesmata. In terms of processing, potyviral RNA is expressed as two polyproteins which undergo post-translational proteolytic processing. Genome polyprotein is processed by NIa-pro, P1 and HC-pro proteinases resulting in the production of at least ten individual proteins. P3N-PIPO is cleaved by P1 and HC-pro proteinases resulting in the production of three individual proteins. The P1 proteinase and the HC-pro cleave only their respective C-termini autocatalytically.

It is found in the host cell junction. It localises to the host plasmodesma. The enzyme catalyses Hydrolyzes a Gly-|-Gly bond at its own C-terminus, commonly in the sequence -Tyr-Xaa-Val-Gly-|-Gly, in the processing of the potyviral polyprotein.. In terms of biological role, required for aphid transmission and also has proteolytic activity. Only cleaves a Gly-Gly dipeptide at its own C-terminus. Interacts with virions and aphid stylets. Acts as a suppressor of RNA-mediated gene silencing, also known as post-transcriptional gene silencing (PTGS), a mechanism of plant viral defense that limits the accumulation of viral RNAs. May have RNA-binding activity. Allows efficient cell to cell propagation, by bypassing the host cell wall barrier. Transports viral genome to neighboring plant cells directly through plasmosdesmata, without any budding. This Beet mosaic virus (BtMV) protein is P3N-PIPO polyprotein.